The sequence spans 398 residues: 8-amino-7-oxononanoate synthase (398 aa).

Arg-22 and Arg-29 together coordinate substrate. Pyridoxal 5'-phosphate is bound at residue 109-110; that stretch reads GW. His-141 is a binding site for substrate. Residues Ser-189, 214–217, and 242–245 each bind pyridoxal 5'-phosphate; these read DEAH and TFSK. Residue Lys-245 is modified to N6-(pyridoxal phosphate)lysine. Thr-359 contributes to the substrate binding site.

Belongs to the class-II pyridoxal-phosphate-dependent aminotransferase family. BioF subfamily. Homodimer. The cofactor is pyridoxal 5'-phosphate.

The catalysed reaction is 6-carboxyhexanoyl-[ACP] + L-alanine + H(+) = (8S)-8-amino-7-oxononanoate + holo-[ACP] + CO2. It participates in cofactor biosynthesis; biotin biosynthesis. In terms of biological role, catalyzes the decarboxylative condensation of pimeloyl-[acyl-carrier protein] and L-alanine to produce 8-amino-7-oxononanoate (AON), [acyl-carrier protein], and carbon dioxide. This Gluconacetobacter diazotrophicus (strain ATCC 49037 / DSM 5601 / CCUG 37298 / CIP 103539 / LMG 7603 / PAl5) protein is 8-amino-7-oxononanoate synthase.